The sequence spans 975 residues: Protein cramped (975 aa).

5 disordered regions span residues 1–37 (MEEL…GGGA), 71–111 (QKMK…GSGK), 318–346 (AIFP…PSVA), 403–450 (PVAA…LMKM), and 809–844 (PIDR…QEPG). Pro residues predominate over residues 7–20 (QPPPPPPLPPPPSS). Residues 86 to 98 (SEREPNKKEEKAA) are compositionally biased toward basic and acidic residues. Positions 100–111 (KTPSQLKTGSGK) are enriched in polar residues. The 65-residue stretch at 109–173 (SGKTTWTNVE…HYYQTYHKIC (65 aa)) folds into the SANT domain. Residues 410–425 (LRTESGSEKRSPETKK) are compositionally biased toward basic and acidic residues. Low complexity predominate over residues 815-833 (GTSSGGISSSGSKPDSSMG).

Belongs to the cramped family.

It localises to the nucleus. Functionally, polycomb group (Pc-G) genes are needed to maintain expression patterns of the homeotic selector genes of the Antennapedia (Antp-C) and Bithorax (Bx-C) complexes, and hence for the maintenance of segmental determination. Can act as a modifier of position effect variegation (PEV). This chain is Protein cramped (crm), found in Drosophila sechellia (Fruit fly).